The following is a 353-amino-acid chain: Putative glutamine synthetase (353 aa).

Residues 19 to 102 (SIIEYVWIGG…VICDTYDVNG (84 aa)) enclose the GS beta-grasp domain. In terms of domain architecture, GS catalytic spans 109-353 (HRHNANIIFE…IILQTVCESD (245 aa)).

This sequence belongs to the glutamine synthetase family.

The enzyme catalyses L-glutamate + NH4(+) + ATP = L-glutamine + ADP + phosphate + H(+). In Acanthamoeba polyphaga (Amoeba), this protein is Putative glutamine synthetase.